The chain runs to 673 residues: MAKPAQGAKYRGSIRDFPDFNPSQDAETLYNAMKGFGSDKEAILELITSRSNRQRQEICQNYKSLYGKDLIADLKYELTGKFERLIVGLMRPPAYADAKEIKDAISGIGTDEKCLIEILASRTNEQIHQLVAAYKDAYERDLEADITGDTSGHFRKMLVVLLQGTREEDDVVSEDLVQQDVQDLYEAGELKWGTDEAQFIYILGNRSKQHLRLVFDEYLKTTGKPIEASIRGELSGDFEKLMLAVVKCIRSTAEYFAERLFKAMKGLGTRDNTLIRIMVSRSELDMLDIREIFRTKYEKSLYSMIKNDTSGEYKKTLLKLCGGDDDAAGQFFPEAAQVAYQMWELSAVARVELKGTVRPAGDFNPDADAKALRKAMKGLGTDEDTIIDIIAHRSNAQRQQIRQTFKSHFGRDLMADLKSELSGDLARLILGLMMPPAHYDAKQLKKAMEGAGTDEKALIEILATRTNAEIQAINKAYKEDYHKSLEDALSSDTSGHFKRILISLATGNREEGGEDRERAREDAQVAAEILEIADTTSGDKSSLETRFMMILCTRSYPHLRRVFQEFIKMTNYDVEHTIKKEMSGDVRDVFVAIVQSVKNKPLFFADKLYKSMKGAGTDEKTLTRIMVSRSEIDLLNIRREFIEKYDKSLHQAIEGDTSGHFLKALLAICGGED.

Ala-2 carries the N-acetylalanine modification. The residue at position 13 (Ser-13) is a Phosphoserine. Annexin repeat units follow at residues 20 to 91 (FNPS…GLMR), 92 to 163 (PPAY…VLLQ), 175 to 247 (DLVQ…AVVK), 251 to 322 (STAE…KLCG), 363 to 434 (FNPD…GLMM), 435 to 506 (PPAH…SLAT), 521 to 595 (EDAQ…AIVQ), and 599 to 670 (NKPL…AICG). Tyr-30 is subject to Phosphotyrosine. Residues Lys-63, Lys-68, Lys-75, and Lys-81 each carry the N6-acetyllysine modification. At Tyr-201 the chain carries Phosphotyrosine. Residues Lys-306, Lys-370, and Lys-418 each carry the N6-acetyllysine modification. Position 422 is a phosphoserine (Ser-422). An N6-acetyllysine modification is found at Lys-483. A Phosphoserine modification is found at Ser-537. Lys-620 bears the N6-acetyllysine mark.

The protein belongs to the annexin family. Post-translationally, phosphorylated in response to growth factor stimulation.

The protein resides in the cytoplasm. It localises to the melanosome. May associate with CD21. May regulate the release of Ca(2+) from intracellular stores. This is Annexin A6 (ANXA6) from Bos taurus (Bovine).